The following is a 164-amino-acid chain: ATP synthase subunit b (164 aa).

Residues 4-24 (LGINPTLFIAQLINFLLLIFI) form a helical membrane-spanning segment.

It belongs to the ATPase B chain family. F-type ATPases have 2 components, F(1) - the catalytic core - and F(0) - the membrane proton channel. F(1) has five subunits: alpha(3), beta(3), gamma(1), delta(1), epsilon(1). F(0) has four main subunits: a(1), b(2) and c(10-14). The alpha and beta chains form an alternating ring which encloses part of the gamma chain. F(1) is attached to F(0) by a central stalk formed by the gamma and epsilon chains, while a peripheral stalk is formed by the delta and b chains.

The protein resides in the cell membrane. Its function is as follows. F(1)F(0) ATP synthase produces ATP from ADP in the presence of a proton or sodium gradient. F-type ATPases consist of two structural domains, F(1) containing the extramembraneous catalytic core and F(0) containing the membrane proton channel, linked together by a central stalk and a peripheral stalk. During catalysis, ATP synthesis in the catalytic domain of F(1) is coupled via a rotary mechanism of the central stalk subunits to proton translocation. In terms of biological role, component of the F(0) channel, it forms part of the peripheral stalk, linking F(1) to F(0). This Chloroflexus aurantiacus (strain ATCC 29366 / DSM 635 / J-10-fl) protein is ATP synthase subunit b.